Reading from the N-terminus, the 118-residue chain is MDDVIVVTSDYVPGHRIVKILGVTWGLTVRSRGLGGNLVAGLRTIAGGEIKEYVTLLNDARETALQRLISSAKAMGATAVINMRFDTSDMAQAMTEIVAYGTAVVTEPVENSQNVTLS.

Belongs to the UPF0145 family.

This is UPF0145 protein PTO0347 from Picrophilus torridus (strain ATCC 700027 / DSM 9790 / JCM 10055 / NBRC 100828 / KAW 2/3).